A 302-amino-acid polypeptide reads, in one-letter code: GLABROUS1 enhancer-binding protein (302 aa).

Disordered regions lie at residues 1–55 (MVTP…MKKK) and 158–229 (GQGD…NDDD). Phosphoserine is present on Ser27. Over residues 180-195 (RTNESGEEMLKEHEEE) the composition is skewed to basic and acidic residues. Residues 208-217 (AKTTENGTSS) show a composition bias toward polar residues. Positions 270 to 291 (LSDEWKALCVEETRFNIKKLRF) are non-canonical leucine-zipper.

This sequence belongs to the GeBP family. As to quaternary structure, homo- and heterodimers. Interacts with GPL1, GPL2 and GPL3. Interacts with KIN10, KIN11 and FLZ4. Interacts with KIN10 and KIN11 via its N-terminal part. Interacts with GPL1 and GPL3 via its C-terminal part. In terms of tissue distribution, expressed in the apical meristem and young leaf primordia. Not detected in emerging or mature leaves. Detected in the vascular tissues of cotyledons and leaves, in hydathodes and at the base of flowers and siliques, but not in roots.

It is found in the nucleus. Its subcellular location is the nucleolus. DNA-binding protein, which specifically recognizes the GL1 enhancer sequence. May be involved in leaf initiation. May play redundant roles with GPL1 and GPL2 in cytokinin responses by regulating the transcript levels of type-A ARR response genes. Involved in stress responses. Plays a repressive role in cell expansion by counteracting the positive role of CPR5 in this process, but does not regulate cell proliferation or endoreduplication. May play a role in plant defense. The chain is GLABROUS1 enhancer-binding protein from Arabidopsis thaliana (Mouse-ear cress).